Consider the following 461-residue polypeptide: MFMNPLLPPLWPMIATAVETETEIAPLVLAGVLLSLVVIYFASKLGGEVCLRLNLPPVLGELVGGVLVGVSALKLLLFPEGGLAPEDSLVIQLLMGSADLSPEAAQSVFSAQSEVISVISELGVIILLFEIGLESNLKELIRVGPQAAIVAVVGVVTPFSLGTIGLMTIFGVAAIPAIFAGAALTATSIGITAKVLAEINRLSSNEGQIIIGAAVLDDILGIIVLAVVGSLVKTGEIQISNIIYLILSATGFVVGSILIGRLLSPFYVSLVNRMKTRGQLLLVSICVAFVLSYIAQIVQLEAILGSFAAGLILAETEKREDLEEQILPLADFFVPVFFVCVGAKTDVSVLNPAVPANREGLIIAAFLILVAIVGKVVTGFTLFGKSELNKLAIGVGMIPRGEVGLVFAGVGAASGALDPATDAAIIVMVIVTTFVAPPWLRAVFEGAKKEEAPEKPVPTPD.

11 consecutive transmembrane segments (helical) span residues 22–42 (TEIA…IYFA), 58–78 (VLGE…LLLF), 113–133 (SEVI…EIGL), 148–170 (AIVA…MTIF), 175–197 (IPAI…KVLA), 209–229 (IIIG…AVVG), 239–259 (ISNI…SILI), 280–300 (LLLV…IVQL), 360–380 (GLII…VTGF), 391–411 (LAIG…AGVG), and 424–444 (AIIV…RAVF).

The protein belongs to the monovalent cation:proton antiporter 2 (CPA2) transporter (TC 2.A.37) family.

It is found in the cellular thylakoid membrane. In terms of biological role, na(+)/H(+) antiporter that transports sodium from the cytoplasm into the thylakoid lumen in exchange for protons. Contributes to sodium homeostasis and tolerance. Also has Li(+)/H(+) antiport activity under K(+)-free conditions, but not under K(+)-rich conditions. The sequence is that of High-affinity Na(+)/H(+) antiporter NhaS3 (nhaS3) from Synechocystis sp. (strain ATCC 27184 / PCC 6803 / Kazusa).